Consider the following 184-residue polypeptide: Outer-membrane lipoprotein carrier protein (184 aa).

A signal peptide spans M1 to A19.

Belongs to the LolA family. Monomer.

It localises to the periplasm. Its function is as follows. Participates in the translocation of lipoproteins from the inner membrane to the outer membrane. Only forms a complex with a lipoprotein if the residue after the N-terminal Cys is not an aspartate (The Asp acts as a targeting signal to indicate that the lipoprotein should stay in the inner membrane). In Helicobacter pylori (strain HPAG1), this protein is Outer-membrane lipoprotein carrier protein.